A 236-amino-acid polypeptide reads, in one-letter code: DNA repair protein RecO (236 aa).

The protein belongs to the RecO family.

Involved in DNA repair and RecF pathway recombination. The sequence is that of DNA repair protein RecO from Rickettsia typhi (strain ATCC VR-144 / Wilmington).